We begin with the raw amino-acid sequence, 347 residues long: 4-hydroxy-2-oxovalerate aldolase (347 aa).

The region spanning 2–252 (ILISDATLRD…DTRTTFERVM (251 aa)) is the Pyruvate carboxyltransferase domain. Residue 10–11 (RD) participates in substrate binding. Residue Asp11 coordinates Mn(2+). The active-site Proton acceptor is His14. Ser164 and His191 together coordinate substrate. Mn(2+) is bound by residues His191 and His193.

The protein belongs to the 4-hydroxy-2-oxovalerate aldolase family.

The enzyme catalyses (S)-4-hydroxy-2-oxopentanoate = acetaldehyde + pyruvate. The polypeptide is 4-hydroxy-2-oxovalerate aldolase (Burkholderia pseudomallei (strain 1106a)).